The sequence spans 316 residues: Porphobilinogen deaminase (316 aa).

C245 is modified (S-(dipyrrolylmethanemethyl)cysteine).

It belongs to the HMBS family. As to quaternary structure, monomer. The cofactor is dipyrromethane.

The catalysed reaction is 4 porphobilinogen + H2O = hydroxymethylbilane + 4 NH4(+). The protein operates within porphyrin-containing compound metabolism; protoporphyrin-IX biosynthesis; coproporphyrinogen-III from 5-aminolevulinate: step 2/4. Its pathway is porphyrin-containing compound metabolism; chlorophyll biosynthesis. In terms of biological role, tetrapolymerization of the monopyrrole PBG into the hydroxymethylbilane pre-uroporphyrinogen in several discrete steps. In Prochlorococcus marinus subsp. pastoris (strain CCMP1986 / NIES-2087 / MED4), this protein is Porphobilinogen deaminase.